We begin with the raw amino-acid sequence, 286 residues long: uncharacterized protein (286 aa).

The active-site Proton donor is H183. C277 serves as the catalytic Nucleophile.

This sequence belongs to the DDAH family.

This is an uncharacterized protein from Bacillus subtilis (strain 168).